The following is a 208-amino-acid chain: NADH-ubiquinone oxidoreductase chain 4 (208 aa).

Helical transmembrane passes span 23 to 43 (VWIN…VTLW), 60 to 80 (SLSS…LLAS), 93 to 113 (KMYI…FSAN), 114 to 134 (ELIM…IIIT), 147 to 167 (LYFL…LISI), and 188 to 208 (PTWS…IKMP).

Belongs to the complex I subunit 4 family. As to quaternary structure, core subunit of respiratory chain NADH dehydrogenase (Complex I) which is composed of 45 different subunits.

It is found in the mitochondrion inner membrane. It carries out the reaction a ubiquinone + NADH + 5 H(+)(in) = a ubiquinol + NAD(+) + 4 H(+)(out). In terms of biological role, core subunit of the mitochondrial membrane respiratory chain NADH dehydrogenase (Complex I) which catalyzes electron transfer from NADH through the respiratory chain, using ubiquinone as an electron acceptor. Essential for the catalytic activity and assembly of complex I. The polypeptide is NADH-ubiquinone oxidoreductase chain 4 (MT-ND4) (Phodopus sungorus (Striped hairy-footed hamster)).